We begin with the raw amino-acid sequence, 132 residues long: Z-ring associated protein G (132 aa).

The chain crosses the membrane as a helical span at residues 1–21; it reads MTWEYALIGLVVGIIIGAVAM. Residues 95–132 form a disordered region; sequence FRNRLAESEASNDQAPVQMPRDYSEGASGLLRTGAKRD.

This sequence belongs to the ZapG family.

The protein resides in the cell inner membrane. Its function is as follows. Involved in cell division, cell envelope biogenesis and cell shape maintenance. The chain is Z-ring associated protein G from Escherichia coli O157:H7.